The primary structure comprises 174 residues: Disulfide bond formation protein B (174 aa).

Topologically, residues 1–17 (MSFQVVTGWLDNSPRRI) are cytoplasmic. Residues 18–34 (FAFVSLASIGMLAFGQY) traverse the membrane as a helical segment. Residues 35-52 (LQHVVGLEPCPMCIVQRY) lie on the Periplasmic side of the membrane. A disulfide bridge links C44 with C47. Residues 53 to 67 (ALVLVAIIAGLTGAS) form a helical membrane-spanning segment. Over 68–74 (GRKGLHL) the chain is Cytoplasmic. The helical transmembrane segment at 75–92 (GGAVLMLGSSGFGAYVAA) threads the bilayer. The Periplasmic segment spans residues 93–148 (RQSWLQWYPPEVVSCGRDFYGMIETFPLQRAIPMIFKGSGDCSKVDWTFLGGSIAN). C107 and C134 are joined by a disulfide. Residues 149–167 (WTFVVFGLIVLLSLALIWR) form a helical membrane-spanning segment. Topologically, residues 168 to 174 (RVSRRVS) are cytoplasmic.

This sequence belongs to the DsbB family.

The protein localises to the cell inner membrane. Required for disulfide bond formation in some periplasmic proteins. Acts by oxidizing the DsbA protein. This Albidiferax ferrireducens (strain ATCC BAA-621 / DSM 15236 / T118) (Rhodoferax ferrireducens) protein is Disulfide bond formation protein B.